The sequence spans 109 residues: MYQLQFINLVYDTTKLTHLEQTNINLFIGNWSNHQLQKSICIRHGDDTSHNQYHILFIDTAHQRIKFSSFDNEEIIYILDYDDTQHILMQTSSKQGIGTSRPIVYERLV.

Residues 97–101 (IGTSR) form a binds to staphopain B region.

Belongs to the protease inhibitor I57 (SspC) family. As to quaternary structure, forms a stable non-covalent complex with prematurely activated/folded SspB.

It localises to the cytoplasm. In terms of biological role, specifically inhibits the cysteine protease staphopain B (SspB) by blocking the active site of the enzyme. Probably required to protect cytoplasmic proteins from being degraded by prematurely activated/folded prostaphopain B. Also involved in growth capacity, viability and bacterial morphology. This chain is Staphostatin B (sspC), found in Staphylococcus aureus (strain MRSA252).